The following is a 410-amino-acid chain: Peptidase T (410 aa).

Residue His-79 coordinates Zn(2+). Residue Asp-81 is part of the active site. Asp-142 is a binding site for Zn(2+). The Proton acceptor role is filled by Glu-176. Zn(2+)-binding residues include Glu-177, Asp-199, and His-381.

Belongs to the peptidase M20B family. Zn(2+) serves as cofactor.

The protein localises to the cytoplasm. The enzyme catalyses Release of the N-terminal residue from a tripeptide.. Cleaves the N-terminal amino acid of tripeptides. The sequence is that of Peptidase T from Bacillus mycoides (strain KBAB4) (Bacillus weihenstephanensis).